Here is a 309-residue protein sequence, read N- to C-terminus: 11-beta-hydroxysteroid dehydrogenase-like 3 (309 aa).

A helical; Signal-anchor for type II membrane protein membrane pass occupies residues 10–30 (LLLPPLTIIFLFLFYPFYLLI). Residues 54–80 (GASS…VARR) and Asp105 contribute to the NADP(+) site. Residue Ser184 participates in substrate binding. Catalysis depends on Tyr197, which acts as the Proton acceptor. NADP(+) is bound by residues 197 to 201 (YAASK) and Lys201.

The protein belongs to the short-chain dehydrogenases/reductases (SDR) family.

Its subcellular location is the membrane. The protein is 11-beta-hydroxysteroid dehydrogenase-like 3 (HSD3) of Arabidopsis thaliana (Mouse-ear cress).